The following is an 84-amino-acid chain: MKQGIHPKYREVVFQDISSDFAFITRSTVRTNETIQWEDGKEYPLFKVEVSSKSHPFYTGKQRALSSGGRVDQFQKKFGISTGN.

This sequence belongs to the bacterial ribosomal protein bL31 family. Type B subfamily. Part of the 50S ribosomal subunit.

This is Large ribosomal subunit protein bL31B from Alkalilimnicola ehrlichii (strain ATCC BAA-1101 / DSM 17681 / MLHE-1).